Consider the following 174-residue polypeptide: Ribosome maturation factor RimM (174 aa).

The PRC barrel domain maps to 95-174 (DDEFYWRDLI…QIQVEWPSDF (80 aa)).

The protein belongs to the RimM family. In terms of assembly, binds ribosomal protein uS19.

It is found in the cytoplasm. In terms of biological role, an accessory protein needed during the final step in the assembly of 30S ribosomal subunit, possibly for assembly of the head region. Essential for efficient processing of 16S rRNA. May be needed both before and after RbfA during the maturation of 16S rRNA. It has affinity for free ribosomal 30S subunits but not for 70S ribosomes. This chain is Ribosome maturation factor RimM, found in Idiomarina loihiensis (strain ATCC BAA-735 / DSM 15497 / L2-TR).